A 99-amino-acid chain; its full sequence is Large ribosomal subunit protein uL23 (99 aa).

It belongs to the universal ribosomal protein uL23 family. As to quaternary structure, part of the 50S ribosomal subunit. Contacts protein L29, and trigger factor when it is bound to the ribosome.

Functionally, one of the early assembly proteins it binds 23S rRNA. One of the proteins that surrounds the polypeptide exit tunnel on the outside of the ribosome. Forms the main docking site for trigger factor binding to the ribosome. This is Large ribosomal subunit protein uL23 from Rhodopseudomonas palustris (strain BisB5).